Here is a 142-residue protein sequence, read N- to C-terminus: Large ribosomal subunit protein bL17 (142 aa).

The protein belongs to the bacterial ribosomal protein bL17 family. As to quaternary structure, part of the 50S ribosomal subunit. Contacts protein L32.

The polypeptide is Large ribosomal subunit protein bL17 (Brucella abortus (strain S19)).